Here is an 845-residue protein sequence, read N- to C-terminus: Proto-oncogene vav (845 aa).

Residues 1-119 (MELWRQCTHW…YTLSALSWTP (119 aa)) enclose the Calponin-homology (CH) domain. One can recognise a DH domain in the interval 194-373 (KRCCCLREIQ…RDLAQCVNEV (180 aa)). Residues 402–504 (RPKIDGELKI…WMEQFEMAIS (103 aa)) enclose the PH domain. The Phorbol-ester/DAG-type zinc finger occupies 515 to 564 (GHDFQMFSFEETTSCKACQMLLRGTFYQGYRCYRCRAPAHKECLGRVPPC). One can recognise an SH3 1 domain in the interval 592-660 (LGLPKMEVFQ…PCNRVHPYVH (69 aa)). The region spanning 671-765 (WYAGPMERAG…SLDTTLQFPY (95 aa)) is the SH2 domain. The SH3 2 domain maps to 782-842 (KYFGTAKARY…PSNYVEEDYS (61 aa)). Phosphotyrosine is present on residues Tyr826 and Tyr844.

Interacts with SHB. Interacts with APS, DOCK2, GRB2, GRB3, DOCK2, SLA, TEC and ZNF655/VIK. Interacts with SIAH2; without leading to its degradation. Associates with BLNK, PLCG1, GRB2 and NCK1 in a B-cell antigen receptor-dependent fashion. Interacts with CBLB; which inhibits tyrosine phosphorylation and down-regulates activity. May interact with CCPG1. Interacts with CLNK. Interacts with THEMIS2. Interacts with NEK3 and this interaction is prolactin-dependent. Interacts with ITK. Interacts with PTK2B/PYK2. Interacts with HCK. Interacts with PTK2B/PYK2. Interacts (via SH2 domain) with SYK. Interacts with ANKRD54. Interacts with CD6. Interacts with isoform 2 of CRACR2A. Interacts with LCP2; this interaction plays a role in TCR-mediated cytokine production. In terms of processing, phosphorylated by FYN. Phosphorylated on tyrosine residues by HCK in response to IFNG and bacterial lipopolysaccharide (LPS). As to expression, widely expressed in hematopoietic cells but not in other cell types. Found in the spleen and lung.

Its function is as follows. Couples tyrosine kinase signals with the activation of the Rho/Rac GTPases, thus leading to cell differentiation and/or proliferation. In Mus musculus (Mouse), this protein is Proto-oncogene vav (Vav1).